A 954-amino-acid chain; its full sequence is ATPase 9, plasma membrane-type (954 aa).

The Cytoplasmic portion of the chain corresponds to 1-66; it reads MAGNKDSSWD…EKKENKVLKF (66 aa). A helical transmembrane segment spans residues 67 to 86; sequence LGFMWNPLSWVMELAAIMAI. Over 87 to 98 the chain is Extracellular; it reads ALANGGGRPPDW. Residues 99–119 traverse the membrane as a helical segment; that stretch reads QDFVGITVLLIINSTISFIEE. Residues 120-248 lie on the Cytoplasmic side of the membrane; the sequence is NNAGNAAAAL…GHFQKVLTAI (129 aa). A helical transmembrane segment spans residues 249-269; the sequence is GNFCICSIAIGMLIEIVVMYP. At 270–278 the chain is on the extracellular side; that stretch reads IQKRAYRDG. Residues 279–296 traverse the membrane as a helical segment; the sequence is IDNLLVLLIGGIPIAMPT. At 297–648 the chain is on the cytoplasmic side; it reads VLSVTMAIGS…TSRAIFQRMK (352 aa). D334 serves as the catalytic 4-aspartylphosphate intermediate. Mg(2+)-binding residues include D593 and D597. A helical membrane pass occupies residues 649 to 670; it reads NYTIYAVSITIRIVMGFMLLAL. Residues 671–675 lie on the Extracellular side of the membrane; it reads IWKFD. Residues 676–698 form a helical membrane-spanning segment; the sequence is FSPFMVLIVAILNDGTIMTISKD. The Cytoplasmic segment spans residues 699 to 714; that stretch reads RVKPSPLPDSWKLKEI. A helical membrane pass occupies residues 715-735; the sequence is FATGVVLGTYLAVMTVVFFWA. The Extracellular portion of the chain corresponds to 736 to 756; that stretch reads AESTDFFSAKFGVRSISGNPH. Residues 757 to 777 form a helical membrane-spanning segment; it reads ELTAAVYLQVSIVSQALIFVT. Over 778–789 the chain is Cytoplasmic; the sequence is RSRSWSYVERPG. A helical membrane pass occupies residues 790-810; it reads FWLISAFFMAQLIATLIAVYA. Over 811–818 the chain is Extracellular; sequence NWNFARIR. Residues 819–839 traverse the membrane as a helical segment; it reads GIGWGWAGVIWLYSIVFYIPL. Topologically, residues 840 to 954 are cytoplasmic; the sequence is DILKFIIRYS…IEAIQQHYTL (115 aa). Position 886 is a phosphothreonine (T886). At S936 the chain carries Phosphoserine. An interaction with 14-3-3 proteins region spans residues 952-954; sequence YTL. The residue at position 953 (T953) is a Phosphothreonine.

Belongs to the cation transport ATPase (P-type) (TC 3.A.3) family. Type IIIA subfamily. Binds to 14-3-3 proteins. The binding is induced by phosphorylation of Thr-953. Binding to 14-3-3 proteins activates the H(+)-ATPase. Anther specific. Expressed in guard cells.

The protein resides in the membrane. It catalyses the reaction ATP + H2O + H(+)(in) = ADP + phosphate + 2 H(+)(out). In terms of biological role, the plasma membrane H(+) ATPase of plants and fungi generates a proton gradient that drives the active transport of nutrients by H(+)-symport. The resulting external acidification and/or internal alkinization may mediate growth responses. The protein is ATPase 9, plasma membrane-type (AHA9) of Arabidopsis thaliana (Mouse-ear cress).